A 105-amino-acid polypeptide reads, in one-letter code: Endoribonuclease MazF1 (105 aa).

Belongs to the PemK/MazF family. Forms a complex with cognate antitoxin MazE1.

Functionally, toxic component of a type II toxin-antitoxin (TA) system. Acts as an endoribonuclease on single-strand RNA, cleaving between the first and second bases in the sequence UCGCU. Neutralized by coexpression with cognate antitoxin MazE1. This Mycobacterium bovis (strain ATCC BAA-935 / AF2122/97) protein is Endoribonuclease MazF1 (mazF1).